We begin with the raw amino-acid sequence, 136 residues long: Large ribosomal subunit protein uL16 (136 aa).

This sequence belongs to the universal ribosomal protein uL16 family. In terms of assembly, part of the 50S ribosomal subunit.

In terms of biological role, binds 23S rRNA and is also seen to make contacts with the A and possibly P site tRNAs. This is Large ribosomal subunit protein uL16 from Aliivibrio salmonicida (strain LFI1238) (Vibrio salmonicida (strain LFI1238)).